The sequence spans 112 residues: UPF0122 protein CPR_1686 (112 aa).

This sequence belongs to the UPF0122 family.

In terms of biological role, might take part in the signal recognition particle (SRP) pathway. This is inferred from the conservation of its genetic proximity to ftsY/ffh. May be a regulatory protein. This chain is UPF0122 protein CPR_1686, found in Clostridium perfringens (strain SM101 / Type A).